The chain runs to 188 residues: Elongation factor P (188 aa).

Belongs to the elongation factor P family.

It is found in the cytoplasm. It functions in the pathway protein biosynthesis; polypeptide chain elongation. In terms of biological role, involved in peptide bond synthesis. Stimulates efficient translation and peptide-bond synthesis on native or reconstituted 70S ribosomes in vitro. Probably functions indirectly by altering the affinity of the ribosome for aminoacyl-tRNA, thus increasing their reactivity as acceptors for peptidyl transferase. This is Elongation factor P from Azotobacter vinelandii (strain DJ / ATCC BAA-1303).